Here is a 132-residue protein sequence, read N- to C-terminus: Small ribosomal subunit protein uS8 (132 aa).

Belongs to the universal ribosomal protein uS8 family. Part of the 30S ribosomal subunit. Contacts proteins S5 and S12.

One of the primary rRNA binding proteins, it binds directly to 16S rRNA central domain where it helps coordinate assembly of the platform of the 30S subunit. This is Small ribosomal subunit protein uS8 from Sinorhizobium fredii (strain NBRC 101917 / NGR234).